A 462-amino-acid polypeptide reads, in one-letter code: UDP-N-acetylmuramoylalanine--D-glutamate ligase (462 aa).

An ATP-binding site is contributed by 120–126 (GTNGKTT).

The protein belongs to the MurCDEF family.

It localises to the cytoplasm. It carries out the reaction UDP-N-acetyl-alpha-D-muramoyl-L-alanine + D-glutamate + ATP = UDP-N-acetyl-alpha-D-muramoyl-L-alanyl-D-glutamate + ADP + phosphate + H(+). It participates in cell wall biogenesis; peptidoglycan biosynthesis. In terms of biological role, cell wall formation. Catalyzes the addition of glutamate to the nucleotide precursor UDP-N-acetylmuramoyl-L-alanine (UMA). The protein is UDP-N-acetylmuramoylalanine--D-glutamate ligase of Bdellovibrio bacteriovorus (strain ATCC 15356 / DSM 50701 / NCIMB 9529 / HD100).